Reading from the N-terminus, the 314-residue chain is Olfactory receptor 5G9 (314 aa).

Residues 1–25 (MADENYTRITEFIFIGLRYHPNLQV) lie on the Extracellular side of the membrane. An N-linked (GlcNAc...) asparagine glycan is attached at Asn-5. Residues 26–46 (FLFLLFLLFYLVTMTGNLGMI) traverse the membrane as a helical segment. Residues 47-54 (ILIRVDSR) lie on the Cytoplasmic side of the membrane. Residues 55-75 (LHTPMYFFLSHLSFVDICFSS) form a helical membrane-spanning segment. The Extracellular segment spans residues 76-99 (VVAPKMLTDFFADKKAISFLGCVL). Residues Cys-97 and Cys-189 are joined by a disulfide bond. A helical transmembrane segment spans residues 100–120 (QQWFFGFFVAIECLLLASMAY). Over 121–133 (DRYVAICNPLLYS) the chain is Cytoplasmic. Residues 134–154 (VAMSQRLCIQLVIGPYAVGFF) form a helical membrane-spanning segment. At 155–196 (NTMTHTTAAFRLPFCGSNIINHFFCDMSPILSLICADIRINK) the chain is on the extracellular side. The chain crosses the membrane as a helical span at residues 197-217 (LLVFIVAGAVLIVSSTTIIVS). Residues 218-237 (YFHILIAILRIRSAEGRRKA) are Cytoplasmic-facing. The helical transmembrane segment at 238–258 (FSTCSSHVTAVSILYGTLFFI) threads the bilayer. The Extracellular portion of the chain corresponds to 259–271 (YVRPSAISSLDLN). Residues 272-292 (KVVSVFYTAVIPMLNPLIYSL) form a helical membrane-spanning segment. Residues 293-314 (RNKEVKSAMGRTVAKAKVFLKN) lie on the Cytoplasmic side of the membrane.

It belongs to the G-protein coupled receptor 1 family.

It localises to the cell membrane. Functionally, potential odorant receptor. The polypeptide is Olfactory receptor 5G9 (Mus musculus (Mouse)).